We begin with the raw amino-acid sequence, 122 residues long: Large ribosomal subunit protein uL14c (122 aa).

It belongs to the universal ribosomal protein uL14 family. In terms of assembly, part of the 50S ribosomal subunit.

The protein localises to the plastid. It is found in the chloroplast. Functionally, binds to 23S rRNA. The chain is Large ribosomal subunit protein uL14c from Amborella trichopoda.